A 201-amino-acid chain; its full sequence is Large ribosomal subunit protein uL4 (201 aa).

The segment at 43-73 is disordered; the sequence is TRAQKTRSEVSGGGAKPWRQKGTGRARAGTT.

It belongs to the universal ribosomal protein uL4 family. As to quaternary structure, part of the 50S ribosomal subunit.

Its function is as follows. One of the primary rRNA binding proteins, this protein initially binds near the 5'-end of the 23S rRNA. It is important during the early stages of 50S assembly. It makes multiple contacts with different domains of the 23S rRNA in the assembled 50S subunit and ribosome. Forms part of the polypeptide exit tunnel. The chain is Large ribosomal subunit protein uL4 from Colwellia psychrerythraea (strain 34H / ATCC BAA-681) (Vibrio psychroerythus).